Reading from the N-terminus, the 702-residue chain is MRLSVIILAIFMISLFIMAAFLFFKRRRLDGSYHLPSLAKPTYRKLTQDDYGVISDYLSYFGTSKFSAGYSLQNFPEIPTKGEVVTTLRNIVNRFAGSSEGINHWRYYIDAVEIHIPPLLVPYLQQENVLDVVCTPSIPIVIGVNGHFLKDEKSHFSALSLKQLSEPILSNGTSTIQKNEGDAAHLLHIRQETNEEYRLHHSSGFWNGSLICLGLILWLTALMMPQVFLPWIMAAGGTFLVLGLFLIYRPIIKSRKQEVHCFKGRLKRWGLFGNFDHGQVKNISLGGIDLVYPPHWEPYIQNDIDKVTYLEMYPNHHVIKQGPYLSLHDEEKNYPYKRYIKNIIFVVCSLFIIGMLYLYQPLSLSMKLTFSWIKESEPHLVTNFTELETAKLHVGDIIQAKGVGMCYMPPNLSSKNNKTIFAPFDCSGIYWNNSNPMPMPESSTIEKAAALLYLVEEQLHPVSNNRVNPSLGQAITKSGMNLLDNFDGIILKTQDLCPRENECIRLKMALVNLSNVNDWPSLVQRAESGKLTGTNVLLRAVSAEALEKLVDTTTSSFIYREIDKAAILLNSPPPGGVLLISDERKQLVDYASNTNSVFEPTPLEQWRELQRLSDILLHTPFNTGGVITGMVIDANGTLQIFLHSMPDSMTLLYYIGNTLLLFFAIGFLILNLFFIIRRRRQNNQRMHKISQYYEHCFYRPPQ.

Helical transmembrane passes span 4–24 (SVII…FLFF), 204–224 (GFWN…ALMM), 227–247 (VFLP…LFLI), 343–363 (IIFV…QPLS), and 656–676 (GNTL…FFII).

The protein belongs to the IgaA family.

Its subcellular location is the cell inner membrane. Its function is as follows. Up-regulator of flagellar flhDC master operon. The sequence is that of Flagellar operon control protein UmoB (umoB) from Proteus mirabilis.